The primary structure comprises 379 residues: Structure-specific endonuclease subunit EME2 (379 aa).

The segment at 1 to 55 (MARVGPGRAGVSCQGRGRGRGGSGQRRPPTWEISDSDAEDSAGSEAAARARDPAG) is disordered. The nuclease-like domain; forms the post-nick DNA binding interface and is involved in DNA recognition and bending stretch occupies residues 50–266 (ARDPAGERRA…YPLKQYRESQ (217 aa)). Residues 288-379 (GLQAAWRRQI…NPDLLLDLGS (92 aa)) form a helix-hairpin-helix (2HhH); forms the pre-nick DNA binding interface and is involved in DNA recognition and bending region.

It belongs to the EME1/MMS4 family. As to quaternary structure, part of the heterodimeric MUS81-EME2 complex; the complex forms specifically during the DNA replication phase of the cell cycle.

The protein localises to the nucleus. Its function is as follows. Non-catalytic subunit of the structure-specific, heterodimeric DNA endonuclease MUS81-EME2 which is involved in the maintenance of genome stability. In the complex, EME2 is required for DNA cleavage, participating in DNA recognition and bending. MUS81-EME2 cleaves 3'-flaps and nicked Holliday junctions, and exhibit limited endonuclease activity with 5' flaps and nicked double-stranded DNAs. MUS81-EME2 which is active during the replication of DNA is more specifically involved in replication fork processing. Replication forks frequently encounter obstacles to their passage, including DNA base lesions, DNA interstrand cross-links, difficult-to-replicate sequences, transcription bubbles, or tightly bound proteins. One mechanism for the restart of a stalled replication fork involves nucleolytic cleavage mediated by the MUS81-EME2 endonuclease. By acting upon the stalled fork, MUS81-EME2 generates a DNA double-strand break (DSB) that can be repaired by homologous recombination, leading to the restoration of an active fork. MUS81-EME2 could also function in telomere maintenance. This is Structure-specific endonuclease subunit EME2 from Homo sapiens (Human).